A 1032-amino-acid chain; its full sequence is Y' element ATP-dependent helicase YPR204W (1032 aa).

The Helicase ATP-binding domain occupies 1–175; that stretch reads MADTPSVAVQ…LQRIGLTGLA (175 aa). 11-18 provides a ligand contact to ATP; that stretch reads APPGYGKT. The DEAH box signature appears at 121-124; sequence DEFH. Positions 232–381 constitute a Helicase C-terminal domain; sequence KLLLALFEIE…EFYGLESKKG (150 aa). A compositionally biased stretch (low complexity) spans 455 to 634; that stretch reads ANASTNATTN…ATTTESTNAS (180 aa). The disordered stretch occupies residues 455-658; that stretch reads ANASTNATTN…RFHPVTDINK (204 aa). Over residues 635 to 658 the composition is skewed to basic and acidic residues; sequence AKEDANKDGNAEDNRFHPVTDINK.

The protein belongs to the helicase family. Yeast subtelomeric Y' repeat subfamily.

Its function is as follows. Catalyzes DNA unwinding and is involved in telomerase-independent telomere maintenance. The chain is Y' element ATP-dependent helicase YPR204W from Saccharomyces cerevisiae (strain ATCC 204508 / S288c) (Baker's yeast).